The sequence spans 317 residues: Retinol dehydrogenase 7 (317 aa).

Position 33–57 (33–57 (FITGCDSGFGNLLARQLDRRGMRVL)) interacts with NADP(+). Serine 164 is a substrate binding site. Tyrosine 176 serves as the catalytic Proton acceptor.

The protein belongs to the short-chain dehydrogenases/reductases (SDR) family.

Its subcellular location is the microsome. The protein localises to the endoplasmic reticulum. It catalyses the reaction all-trans-retinol--[retinol-binding protein] + NAD(+) = all-trans-retinal--[retinol-binding protein] + NADH + H(+). The protein operates within cofactor metabolism; retinol metabolism. Acts on retinol bound on cellular retinol-binding protein (CRBP). In Rattus norvegicus (Rat), this protein is Retinol dehydrogenase 7.